The following is a 377-amino-acid chain: L-arabinitol 4-dehydrogenase (377 aa).

Positions 66, 91, 92, 121, 124, 127, 135, and 176 each coordinate Zn(2+). NAD(+)-binding positions include 203–204 (PI), D224, R229, I296, and 320–322 (QYR).

Belongs to the zinc-containing alcohol dehydrogenase family. As to quaternary structure, homotetramer. Zn(2+) serves as cofactor. Post-translationally, the N-terminus is blocked.

The catalysed reaction is L-arabinitol + NAD(+) = L-xylulose + NADH + H(+). The protein operates within carbohydrate degradation; L-arabinose degradation via L-arabinitol; D-xylulose 5-phosphate from L-arabinose (fungal route): step 2/5. Catalyzes the NAD-dependent oxidation of L-arabinitol to L-xylulose in the fungal L-arabinose catabolic pathway. L-arabinose catabolism is important for using plant material as a carbon source. Can partially compensate for xylitol dehydrogenase in xdh1 mutants. Also oxidizes galactitol to L-xylo-3-hexulose as an alternative to the standard Leloir pathway for D-galactose metabolism. NADP cannot act as a cosubstrate. In Hypocrea jecorina (Trichoderma reesei), this protein is L-arabinitol 4-dehydrogenase (lad1).